We begin with the raw amino-acid sequence, 165 residues long: Phosphopantetheine adenylyltransferase (165 aa).

Serine 9 is a binding site for substrate. Residues 9 to 10 (SF) and histidine 17 each bind ATP. Substrate-binding residues include lysine 41, valine 73, and arginine 87. ATP-binding positions include 88 to 90 (GLR), glutamate 98, and 123 to 129 (FTLLSSS).

Belongs to the bacterial CoaD family. Homohexamer. Mg(2+) serves as cofactor.

Its subcellular location is the cytoplasm. It carries out the reaction (R)-4'-phosphopantetheine + ATP + H(+) = 3'-dephospho-CoA + diphosphate. It functions in the pathway cofactor biosynthesis; coenzyme A biosynthesis; CoA from (R)-pantothenate: step 4/5. In terms of biological role, reversibly transfers an adenylyl group from ATP to 4'-phosphopantetheine, yielding dephospho-CoA (dPCoA) and pyrophosphate. The protein is Phosphopantetheine adenylyltransferase of Herpetosiphon aurantiacus (strain ATCC 23779 / DSM 785 / 114-95).